Consider the following 670-residue polypeptide: Acetyl-coenzyme A synthetase (670 aa).

CoA contacts are provided by residues 211–214 (RGGK) and Thr329. Residues 404–406 (GEP), 428–433 (DTYWQT), Asp519, and Arg534 contribute to the ATP site. A CoA-binding site is contributed by Ser542. Arg545 contacts ATP. Residue Arg603 coordinates CoA.

Belongs to the ATP-dependent AMP-binding enzyme family.

It catalyses the reaction acetate + ATP + CoA = acetyl-CoA + AMP + diphosphate. This is Acetyl-coenzyme A synthetase (facA) from Emericella nidulans (strain FGSC A4 / ATCC 38163 / CBS 112.46 / NRRL 194 / M139) (Aspergillus nidulans).